Consider the following 318-residue polypeptide: 2-desacetyl-2-hydroxyethyl bacteriochlorophyllide A dehydrogenase (318 aa).

Its pathway is porphyrin-containing compound metabolism; bacteriochlorophyll biosynthesis (light-independent). Its function is as follows. This protein catalyzes the penultimate step in bacteriochlorophyll a biosynthesis. The sequence is that of 2-desacetyl-2-hydroxyethyl bacteriochlorophyllide A dehydrogenase (bchC) from Cereibacter sphaeroides (strain ATCC 17023 / DSM 158 / JCM 6121 / CCUG 31486 / LMG 2827 / NBRC 12203 / NCIMB 8253 / ATH 2.4.1.) (Rhodobacter sphaeroides).